A 532-amino-acid polypeptide reads, in one-letter code: Cytokinin dehydrogenase 8 (532 aa).

A signal peptide spans 1 to 26 (MELKAMYLYAAVLAVLLCSSVNFIQS). An FAD-binding PCMH-type domain is found at 51–238 (VSDAPFAVMR…TRARIPLQLA (188 aa)). Residues A87, G89, and G91 each contribute to the FAD site. H92 is modified (pros-8alpha-FAD histidine). S93, Q97, D162, T167, S173, I177, and I228 together coordinate FAD. N420 carries N-linked (GlcNAc...) asparagine glycosylation. FAD-binding residues include Y482 and Q520.

The protein belongs to the oxygen-dependent FAD-linked oxidoreductase family. As to quaternary structure, monomer. It depends on FAD as a cofactor.

It is found in the secreted. It localises to the extracellular space. The enzyme catalyses N(6)-dimethylallyladenine + A + H2O = 3-methyl-2-butenal + adenine + AH2. Catalyzes the oxidation of cytokinins, a family of N(6)-substituted adenine derivatives that are plant hormones, where the substituent is an isopentenyl group. The protein is Cytokinin dehydrogenase 8 (CKX8) of Oryza sativa subsp. indica (Rice).